The following is a 121-amino-acid chain: Chorion class A proteins Ld9 (121 aa).

This sequence belongs to the chorion protein family.

Functionally, this protein is one of many from the eggshell of the gypsy moth. In Lymantria dispar (Gypsy moth), this protein is Chorion class A proteins Ld9.